The following is a 155-amino-acid chain: MSEQNNTEMNFQLLRIYTKDISFEAPNAPHVFQKDWQPEVKLDLDTASSQLADDVYEVVLRVTVTASLGEETAFLCEVQQAGIFNISGIEGTQMAHCLGAYCPNSLFPYARECITNLVSRGTFPQLNLAPVNFDALFMNYLQQQAAEGAPNHQDA.

Belongs to the SecB family. As to quaternary structure, homotetramer, a dimer of dimers. One homotetramer interacts with 1 SecA dimer.

The protein localises to the cytoplasm. Functionally, one of the proteins required for the normal export of preproteins out of the cell cytoplasm. It is a molecular chaperone that binds to a subset of precursor proteins, maintaining them in a translocation-competent state. It also specifically binds to its receptor SecA. This is Protein-export protein SecB from Cronobacter sakazakii (strain ATCC BAA-894) (Enterobacter sakazakii).